Consider the following 548-residue polypeptide: Chaperonin GroEL 1 (548 aa).

Residues 30–33 (TLGP), K51, 87–91 (DGTTT), G415, 479–481 (NAA), and D495 each bind ATP.

This sequence belongs to the chaperonin (HSP60) family. In terms of assembly, forms a cylinder of 14 subunits composed of two heptameric rings stacked back-to-back. Interacts with the co-chaperonin GroES.

It is found in the cytoplasm. The enzyme catalyses ATP + H2O + a folded polypeptide = ADP + phosphate + an unfolded polypeptide.. Together with its co-chaperonin GroES, plays an essential role in assisting protein folding. The GroEL-GroES system forms a nano-cage that allows encapsulation of the non-native substrate proteins and provides a physical environment optimized to promote and accelerate protein folding. The chain is Chaperonin GroEL 1 from Escherichia coli O1:K1 / APEC.